Reading from the N-terminus, the 151-residue chain is 3-hydroxyacyl-[acyl-carrier-protein] dehydratase FabZ (151 aa).

Residue H49 is part of the active site.

This sequence belongs to the thioester dehydratase family. FabZ subfamily.

The protein localises to the cytoplasm. It catalyses the reaction a (3R)-hydroxyacyl-[ACP] = a (2E)-enoyl-[ACP] + H2O. In terms of biological role, involved in unsaturated fatty acids biosynthesis. Catalyzes the dehydration of short chain beta-hydroxyacyl-ACPs and long chain saturated and unsaturated beta-hydroxyacyl-ACPs. In Bordetella bronchiseptica (strain ATCC BAA-588 / NCTC 13252 / RB50) (Alcaligenes bronchisepticus), this protein is 3-hydroxyacyl-[acyl-carrier-protein] dehydratase FabZ.